Consider the following 418-residue polypeptide: Tyrosine--tRNA ligase (418 aa).

Residue Y34 coordinates L-tyrosine. A 'HIGH' region motif is present at residues 39 to 48 (PTADSLHLGH). Residues Y169 and Q173 each coordinate L-tyrosine. The 'KMSKS' region motif lies at 229-233 (KFGKS). K232 is an ATP binding site. One can recognise an S4 RNA-binding domain in the interval 352–418 (LNIVDMLVTA…GKKKYAVLTY (67 aa)).

It belongs to the class-I aminoacyl-tRNA synthetase family. TyrS type 1 subfamily. Homodimer.

It localises to the cytoplasm. The catalysed reaction is tRNA(Tyr) + L-tyrosine + ATP = L-tyrosyl-tRNA(Tyr) + AMP + diphosphate + H(+). In terms of biological role, catalyzes the attachment of tyrosine to tRNA(Tyr) in a two-step reaction: tyrosine is first activated by ATP to form Tyr-AMP and then transferred to the acceptor end of tRNA(Tyr). This is Tyrosine--tRNA ligase from Streptococcus equi subsp. zooepidemicus (strain MGCS10565).